Consider the following 179-residue polypeptide: Replication restart protein DnaT (179 aa).

The interval 156–179 (GGLPKRDVNTVSEPDSQIPPGFRG) is disordered.

The protein belongs to the DnaT family. Homooligomerizes. Interacts with PriB. Component of the replication restart primosome. Primosome assembly occurs via a 'hand-off' mechanism. PriA binds to replication forks, subsequently PriB then DnaT bind; DnaT then displaces ssDNA to generate the helicase loading substrate.

Functionally, involved in the restart of stalled replication forks, which reloads the replicative helicase on sites other than the origin of replication. Can function in multiple replication restart pathways. Displaces ssDNA from a PriB-ssDNA complex. Probably forms a spiral filament on ssDNA. This is Replication restart protein DnaT from Escherichia coli (strain ATCC 8739 / DSM 1576 / NBRC 3972 / NCIMB 8545 / WDCM 00012 / Crooks).